The chain runs to 350 residues: Biotin synthase (350 aa).

Residues 54-278 form the Radical SAM core domain; the sequence is REIQLSTLLS…TMPQSYVRLS (225 aa). [4Fe-4S] cluster-binding residues include Cys69, Cys73, and Cys76. Positions 113, 144, 204, and 276 each coordinate [2Fe-2S] cluster.

The protein belongs to the radical SAM superfamily. Biotin synthase family. As to quaternary structure, homodimer. The cofactor is [4Fe-4S] cluster. It depends on [2Fe-2S] cluster as a cofactor.

The enzyme catalyses (4R,5S)-dethiobiotin + (sulfur carrier)-SH + 2 reduced [2Fe-2S]-[ferredoxin] + 2 S-adenosyl-L-methionine = (sulfur carrier)-H + biotin + 2 5'-deoxyadenosine + 2 L-methionine + 2 oxidized [2Fe-2S]-[ferredoxin]. Its pathway is cofactor biosynthesis; biotin biosynthesis; biotin from 7,8-diaminononanoate: step 2/2. Functionally, catalyzes the conversion of dethiobiotin (DTB) to biotin by the insertion of a sulfur atom into dethiobiotin via a radical-based mechanism. The protein is Biotin synthase of Neisseria meningitidis serogroup B (strain ATCC BAA-335 / MC58).